Here is a 385-residue protein sequence, read N- to C-terminus: 8-amino-7-oxononanoate synthase (385 aa).

Substrate is bound at residue Arg-21. Position 108–109 (108–109 (GF)) interacts with pyridoxal 5'-phosphate. His-133 provides a ligand contact to substrate. Pyridoxal 5'-phosphate is bound by residues Ser-179, His-207, and Thr-233. Position 236 is an N6-(pyridoxal phosphate)lysine (Lys-236). Substrate is bound at residue Thr-352.

The protein belongs to the class-II pyridoxal-phosphate-dependent aminotransferase family. BioF subfamily. In terms of assembly, homodimer. Pyridoxal 5'-phosphate is required as a cofactor.

The catalysed reaction is 6-carboxyhexanoyl-[ACP] + L-alanine + H(+) = (8S)-8-amino-7-oxononanoate + holo-[ACP] + CO2. It participates in cofactor biosynthesis; biotin biosynthesis. Catalyzes the decarboxylative condensation of pimeloyl-[acyl-carrier protein] and L-alanine to produce 8-amino-7-oxononanoate (AON), [acyl-carrier protein], and carbon dioxide. This chain is 8-amino-7-oxononanoate synthase, found in Salmonella paratyphi B (strain ATCC BAA-1250 / SPB7).